A 568-amino-acid polypeptide reads, in one-letter code: DNA mismatch repair protein MutL (568 aa).

The protein belongs to the DNA mismatch repair MutL/HexB family.

In terms of biological role, this protein is involved in the repair of mismatches in DNA. It is required for dam-dependent methyl-directed DNA mismatch repair. May act as a 'molecular matchmaker', a protein that promotes the formation of a stable complex between two or more DNA-binding proteins in an ATP-dependent manner without itself being part of a final effector complex. The chain is DNA mismatch repair protein MutL from Thermosipho africanus (strain TCF52B).